The chain runs to 926 residues: Transcriptional activator protein acu-15 (926 aa).

Residues 24–51 constitute a DNA-binding region (zn(2)-C6 fungal-type); that stretch reads CDRCRSKKIRCDGIRPCCSQCANVGFEC. 3 disordered regions span residues 100–129, 602–649, and 667–801; these read KMHS…TPAK, LPQS…SASL, and TPQH…TSTG. Residues 119 to 129 show a composition bias toward basic and acidic residues; that stretch reads EIKRDSGTPAK. Composition is skewed to low complexity over residues 623 to 632 and 669 to 681; these read AQQGSPSPSA and QHQQ…LQQQ. 2 stretches are compositionally biased toward polar residues: residues 689 to 703 and 726 to 736; these read ARSQ…QKAQ and RTSTGTQSTPN. Residues 740 to 792 show a composition bias toward low complexity; the sequence is LSLSSPQSPVSPVQMRSQPHQLQQQQQQQPQPQQQQQQHQRSSIASSHSQQGQ.

The protein resides in the nucleus. Positive regulator of acetate induction. This chain is Transcriptional activator protein acu-15 (acu-15), found in Neurospora crassa (strain ATCC 24698 / 74-OR23-1A / CBS 708.71 / DSM 1257 / FGSC 987).